A 362-amino-acid polypeptide reads, in one-letter code: MHFLQNAFVAATMGAAPAAATPLEKRSCTFTSASAAKSGKSSCSTITFDNIAVPAGETLDLTGLKKGTTVIFEGETTFGYKEWKGPLISMSGTDITVKQASGAKINCDGARWWDGKGSNGGKTKPKFFQAHKLDESSITGLKIYNTPVQGFSILADHLTITDVTIDDSAGTSKGHNTDAFDIGQSTYITIDGATVYNQDDCLAINSGEHITFTNGYCDGGHGLSIGSIGGRSDNTVNDVTISNSKVVNSQNGVRIKTIYGKTGTVENVKFEDITLSDISKYGIVVEQDYENGSPTGTPTNGVKVEDITFKKVTGSVKSSGTDIYILCGSGRCSNWTWSGVDVTGGKKSSKCKNVPSGASCSD.

Positions M1 to A20 are cleaved as a signal peptide. Positions T21–K25 are excised as a propeptide. The cysteines at positions 28 and 43 are disulfide-linked. PbH1 repeat units follow at residues A155–Q184, S185–S206, G207–S227, V236–T257, V265–Q287, and T299–G344. The Proton donor role is filled by D199. A disulfide bond links C201 and C217. H221 is an active-site residue. A disulfide bond links C327 and C332. An N-linked (GlcNAc...) asparagine glycan is attached at N334. A disulfide bond links C351 and C360.

Belongs to the glycosyl hydrolase 28 family.

Its subcellular location is the secreted. It catalyses the reaction (1,4-alpha-D-galacturonosyl)n+m + H2O = (1,4-alpha-D-galacturonosyl)n + (1,4-alpha-D-galacturonosyl)m.. Its function is as follows. Involved in maceration and soft-rotting of plant tissue. Hydrolyzes the 1,4-alpha glycosidic bonds of de-esterified pectate in the smooth region of the plant cell wall. The polypeptide is Probable endopolygalacturonase B (pgaB) (Aspergillus kawachii (White koji mold)).